The chain runs to 146 residues: 3-dehydroquinate dehydratase (146 aa).

The active-site Proton acceptor is the Y23. Positions 79, 85, and 92 each coordinate substrate. The Proton donor role is filled by H105. Substrate-binding positions include I106–S107 and R116.

It belongs to the type-II 3-dehydroquinase family. In terms of assembly, homododecamer.

It catalyses the reaction 3-dehydroquinate = 3-dehydroshikimate + H2O. It participates in metabolic intermediate biosynthesis; chorismate biosynthesis; chorismate from D-erythrose 4-phosphate and phosphoenolpyruvate: step 3/7. Functionally, catalyzes a trans-dehydration via an enolate intermediate. In Variovorax paradoxus (strain S110), this protein is 3-dehydroquinate dehydratase.